The primary structure comprises 192 residues: Ribosome maturation factor RimP (192 aa).

The protein belongs to the RimP family.

Its subcellular location is the cytoplasm. In terms of biological role, required for maturation of 30S ribosomal subunits. The protein is Ribosome maturation factor RimP of Delftia acidovorans (strain DSM 14801 / SPH-1).